The primary structure comprises 428 residues: Glutamate-1-semialdehyde 2,1-aminomutase (428 aa).

Lysine 265 carries the post-translational modification N6-(pyridoxal phosphate)lysine.

This sequence belongs to the class-III pyridoxal-phosphate-dependent aminotransferase family. HemL subfamily. Homodimer. It depends on pyridoxal 5'-phosphate as a cofactor.

The protein resides in the cytoplasm. The catalysed reaction is (S)-4-amino-5-oxopentanoate = 5-aminolevulinate. It functions in the pathway porphyrin-containing compound metabolism; protoporphyrin-IX biosynthesis; 5-aminolevulinate from L-glutamyl-tRNA(Glu): step 2/2. The chain is Glutamate-1-semialdehyde 2,1-aminomutase from Shewanella woodyi (strain ATCC 51908 / MS32).